A 321-amino-acid chain; its full sequence is Protein stand still (321 aa).

Coiled-coil stretches lie at residues 74–103 and 147–167; these read KLHE…RKKA and KQEQ…KANL. The span at 146 to 162 shows a compositional bias: basic and acidic residues; the sequence is HKQEQEGATRKLEDSTS. Disordered stretches follow at residues 146–166 and 227–248; these read HKQE…DKAN and QVPP…MEDV. Residues 235–244 show a composition bias toward low complexity; sequence SKSSGSLASS. Residues 272 to 292 adopt a coiled-coil conformation; the sequence is QRDVLQRLERSMAQISQELHC.

Germ cells specific. Expressed in all germ cells. During the first instar larvae, it is expressed in all germ cells of both sexes. In third instar larvae, it decreases in male germ cells while it remains in female germ cells. In adult ovary, it is expressed in cells of the germarium, including the stem cells. In the early previtellogenic stages, it is highly expressed in the nurse cells. During vitellogenesis, it is not translocated into the maturing egg. In testes, it is only expressed during some steps of male germline differentiation. At the apex testis, it is expressed at low level in stem cells and dividing spermatogonia, while in newly formed 16-cell cysts of primary spermatocytes, it is transiently but strongly expressed before vanishing during spermatocyte growth phase.

The protein resides in the nucleus. Functionally, essential in the female germline for proper survival, sex determination and differentiation. Participates in the transcriptional activation of Otu. Does not regulate the expression of Ovo. In Drosophila melanogaster (Fruit fly), this protein is Protein stand still (stil).